Consider the following 466-residue polypeptide: 55 kDa erythrocyte membrane protein (466 aa).

N-acetylthreonine is present on Thr2. Position 19 is a phosphoserine (Ser19). Thr49 carries the post-translational modification Phosphothreonine. Ser57 and Ser110 each carry phosphoserine. A PDZ domain is found at 71–152 (LIQFEKVTEE…MISLKVIPNQ (82 aa)). One can recognise an SH3 domain in the interval 158–228 (ALQMFMRAQF…PSPELQEWRV (71 aa)). Ser243 bears the Phosphoserine mark. Positions 268–466 (VVSYEEVVRL…PQWVPVSWVY (199 aa)) are interaction with PALS1. The 170-residue stretch at 282 to 451 (RKTLVLIGAS…TLKTLQETFD (170 aa)) folds into the Guanylate kinase-like domain.

The protein belongs to the MAGUK family. Heterodimer with PALS1. Interacts with DLG5 and NF2. Interacts (via guanylate kinase-like domain) with WHRN (via third PDZ domain). Interacts with PALS1. In terms of processing, palmitoylated.

The protein resides in the cell membrane. It is found in the cell projection. Its subcellular location is the stereocilium. In terms of biological role, essential regulator of neutrophil polarity. Regulates neutrophil polarization by regulating AKT1 phosphorylation through a mechanism that is independent of PIK3CG activity. This is 55 kDa erythrocyte membrane protein (MPP1) from Bos taurus (Bovine).